The sequence spans 185 residues: Large ribosomal subunit protein uL5 (185 aa).

It belongs to the universal ribosomal protein uL5 family. As to quaternary structure, part of the 50S ribosomal subunit; contacts the 5S rRNA and probably tRNA. Forms a bridge to the 30S subunit in the 70S ribosome.

This is one of the proteins that bind and probably mediate the attachment of the 5S RNA into the large ribosomal subunit, where it forms part of the central protuberance. In the 70S ribosome it contacts protein S13 of the 30S subunit (bridge B1b), connecting the 2 subunits; this bridge is implicated in subunit movement. May contact the P site tRNA; the 5S rRNA and some of its associated proteins might help stabilize positioning of ribosome-bound tRNAs. This chain is Large ribosomal subunit protein uL5, found in Haloquadratum walsbyi (strain DSM 16790 / HBSQ001).